The chain runs to 618 residues: Glutathione-regulated potassium-efflux system protein (618 aa).

Helical transmembrane passes span 6–26 (NPEL…VPLF), 32–52 (GSVL…FGIV), 55–75 (PTAV…IIGL), 94–114 (LLQV…LLGL), 118–138 (VSFI…MQSL), 152–172 (VIST…SVAF), 186–206 (WVSI…GKWL), 227–247 (ALLV…SMAM), 274–294 (GLLL…HLVF), 298–318 (ILLL…VYII), 336–356 (MAHG…AEVI), and 362–382 (ATFT…AQIA). The region spanning 409 to 525 (EDNVLVIGFG…LIKQDVDFIV (117 aa)) is the RCK N-terminal domain.

The protein belongs to the monovalent cation:proton antiporter 2 (CPA2) transporter (TC 2.A.37) family.

Its subcellular location is the cell inner membrane. Transport system that facilitate potassium-efflux, possibly by potassium-proton antiport. The sequence is that of Glutathione-regulated potassium-efflux system protein (kefBC) from Haemophilus influenzae (strain ATCC 51907 / DSM 11121 / KW20 / Rd).